The chain runs to 64 residues: Large ribosomal subunit protein uL29 (64 aa).

The protein belongs to the universal ribosomal protein uL29 family.

This Paraburkholderia phytofirmans (strain DSM 17436 / LMG 22146 / PsJN) (Burkholderia phytofirmans) protein is Large ribosomal subunit protein uL29.